We begin with the raw amino-acid sequence, 387 residues long: Na(+)/H(+) antiporter NhaA (387 aa).

12 helical membrane-spanning segments follow: residues 16–36, 53–73, 89–109, 118–138, 147–167, 171–191, 197–217, 220–240, 251–271, 283–303, 321–341, and 354–374; these read AGGV…NSSI, IEHY…GLEL, LLPI…HMFF, GSGI…SLLG, VFLT…IAIF, GIDV…FILN, ILWP…HSGV, TITG…PDSI, PVAF…IIDS, IGIF…FCAI, VIGV…ITLL, and IAIM…LKMT.

Belongs to the NhaA Na(+)/H(+) (TC 2.A.33) antiporter family.

The protein localises to the cell inner membrane. The catalysed reaction is Na(+)(in) + 2 H(+)(out) = Na(+)(out) + 2 H(+)(in). Functionally, na(+)/H(+) antiporter that extrudes sodium in exchange for external protons. This Cytophaga hutchinsonii (strain ATCC 33406 / DSM 1761 / CIP 103989 / NBRC 15051 / NCIMB 9469 / D465) protein is Na(+)/H(+) antiporter NhaA.